The chain runs to 640 residues: PAN2-PAN3 deadenylation complex subunit PAN3 (640 aa).

A C3H1-type zinc finger spans residues 17–46; it reads ENKDILCRNVLIYGHCRYEDQGCTYNHDQN. 2 stretches are compositionally biased toward polar residues: residues 43 to 53 and 63 to 87; these read HDQNKNSSQPE and DSPS…SQAA. The disordered stretch occupies residues 43–101; sequence HDQNKNSSQPEAPSKKMFNVDSPSFTPSGQSTVLPKKTTLSSQAASAAPFTPRGGGTPT. Residues 237 to 498 form a pseudokinase domain region; the sequence is QVIPNSGLPQ…TIEHFMTGIA (262 aa). ATP contacts are provided by residues N263, R288, 338-345, and 397-398; these read DFHPLSKT and SK. Positions 499–537 form a coiled coil; that stretch reads SQMTTFFDLALQDNDEKLFHLAREVENGRIARSLMKLLT. The interval 538-640 is knob domain; sequence ILERGDYDGV…SKTGAPGANT (103 aa).

This sequence belongs to the protein kinase superfamily. PAN3 family. As to quaternary structure, homodimer. Forms a heterotrimer with a catalytic subunit PAN2 to form the poly(A)-nuclease (PAN) deadenylation complex. Interacts (via PAM-2 motif) with poly(A)-binding protein PAB1 (via PABC domain), conferring substrate specificity of the enzyme complex.

Its subcellular location is the cytoplasm. Functionally, regulatory subunit of the poly(A)-nuclease (PAN) deadenylation complex, one of two cytoplasmic mRNA deadenylases involved in mRNA turnover. PAN specifically shortens poly(A) tails of RNA and the activity is stimulated by poly(A)-binding protein PAB1. PAN deadenylation is followed by rapid degradation of the shortened mRNA tails by the CCR4-NOT complex. Deadenylated mRNAs are then degraded by two alternative mechanisms, namely exosome-mediated 3'-5' exonucleolytic degradation, or deadenylation-dependent mRNA decaping and subsequent 5'-3' exonucleolytic degradation by XRN1. May also be involved in post-transcriptional maturation of mRNA poly(A) tails. PAN3 acts as a positive regulator for PAN activity, recruiting the catalytic subunit PAN2 to mRNA via its interaction with RNA and with PAB1. The sequence is that of PAN2-PAN3 deadenylation complex subunit PAN3 from Chaetomium thermophilum (strain DSM 1495 / CBS 144.50 / IMI 039719) (Thermochaetoides thermophila).